Here is a 335-residue protein sequence, read N- to C-terminus: Nucleoid-associated protein SeAg_B2375 (335 aa).

Belongs to the YejK family.

It is found in the cytoplasm. Its subcellular location is the nucleoid. The polypeptide is Nucleoid-associated protein SeAg_B2375 (Salmonella agona (strain SL483)).